A 527-amino-acid polypeptide reads, in one-letter code: Aspartokinase (527 aa).

Thr-333 carries the phosphothreonine modification. Residues 442–527 (LVGKHMKQYI…RLEQLKRLGI (86 aa)) form the ACT domain.

This sequence belongs to the aspartokinase family. Homohexamer. Interacts with FPR1; the interaction is direct, plays a role in feedback inhibition of aspartokinase by threonine, and inhibited by tacrolimus and sirolimus.

It catalyses the reaction L-aspartate + ATP = 4-phospho-L-aspartate + ADP. It participates in amino-acid biosynthesis; L-methionine biosynthesis via de novo pathway; L-homoserine from L-aspartate: step 1/3. The protein operates within amino-acid biosynthesis; L-threonine biosynthesis; L-threonine from L-aspartate: step 1/5. With respect to regulation, allosterically inhibited by threonine. Functionally, phosphorylates aspartate, the first step in the biosynthesis of amino acids that derive from aspartate (the aspartate family of amino acids), including methioinine and threonine, the latter of which is a precursor to isoleucine. This Saccharomyces cerevisiae (strain ATCC 204508 / S288c) (Baker's yeast) protein is Aspartokinase (HOM3).